The chain runs to 195 residues: ATP-dependent Clp protease proteolytic subunit 2 (195 aa).

Residue Ser92 is the Nucleophile of the active site. His117 is an active-site residue.

Belongs to the peptidase S14 family. Fourteen ClpP subunits assemble into 2 heptameric rings which stack back to back to give a disk-like structure with a central cavity, resembling the structure of eukaryotic proteasomes.

It is found in the cytoplasm. It carries out the reaction Hydrolysis of proteins to small peptides in the presence of ATP and magnesium. alpha-casein is the usual test substrate. In the absence of ATP, only oligopeptides shorter than five residues are hydrolyzed (such as succinyl-Leu-Tyr-|-NHMec, and Leu-Tyr-Leu-|-Tyr-Trp, in which cleavage of the -Tyr-|-Leu- and -Tyr-|-Trp bonds also occurs).. In terms of biological role, cleaves peptides in various proteins in a process that requires ATP hydrolysis. Has a chymotrypsin-like activity. Plays a major role in the degradation of misfolded proteins. The protein is ATP-dependent Clp protease proteolytic subunit 2 of Rhodococcus jostii (strain RHA1).